The chain runs to 347 residues: 3-isopropylmalate dehydrogenase (347 aa).

76 to 87 (GPKWTDPNNRPE) is an NAD(+) binding site. Substrate-binding residues include R94, R104, R132, and D217. The Mg(2+) site is built by D217, D241, and D245. 275-287 (GSAPDIANEDKAN) provides a ligand contact to NAD(+).

It belongs to the isocitrate and isopropylmalate dehydrogenases family. LeuB type 1 subfamily. Homodimer. It depends on Mg(2+) as a cofactor. The cofactor is Mn(2+).

Its subcellular location is the cytoplasm. It carries out the reaction (2R,3S)-3-isopropylmalate + NAD(+) = 4-methyl-2-oxopentanoate + CO2 + NADH. It functions in the pathway amino-acid biosynthesis; L-leucine biosynthesis; L-leucine from 3-methyl-2-oxobutanoate: step 3/4. In terms of biological role, catalyzes the oxidation of 3-carboxy-2-hydroxy-4-methylpentanoate (3-isopropylmalate) to 3-carboxy-4-methyl-2-oxopentanoate. The product decarboxylates to 4-methyl-2 oxopentanoate. This Staphylococcus epidermidis (strain ATCC 35984 / DSM 28319 / BCRC 17069 / CCUG 31568 / BM 3577 / RP62A) protein is 3-isopropylmalate dehydrogenase.